A 422-amino-acid chain; its full sequence is Structural polyprotein (422 aa).

Residues 1 to 359 (SVTEHFNVYK…WPHEIIQYYY (359 aa)) are Extracellular-facing. N-linked (GlcNAc...) asparagine; by host glycans are attached at residues Asn200 and Asn262. Residues 360–382 (GLYPAATIAAVSGXSLMALLTLA) form a helical membrane-spanning segment. Residues 383-422 (ATCCMLATARRKCLTPYALTPGAVVPLTLGLXXCAPRANA) are Cytoplasmic-facing. 3 S-palmitoyl cysteine; by host lipidation sites follow: Cys385, Cys395, and Cys416. The tract at residues 395 to 415 (CLTPYALTPGAVVPLTLGLXX) is transient transmembrane before p62-6K protein processing.

Spike glycoprotein E2: Processing of the precursor of protein E3/E2 into E2 and E3 results in a heterodimer of the spike glycoproteins E2 and E1. Spike glycoprotein E2: Spike at virion surface are constituted of three E2-E1 heterodimers. Spike glycoprotein E2: Interacts with 6K protein. Post-translationally, structural polyprotein: Specific enzymatic cleavages in vivo yield mature proteins. Capsid protein is auto-cleaved during polyprotein translation, unmasking a signal peptide at the N-terminus of the precursor of E3/E2. The remaining polyprotein is then targeted to the host endoplasmic reticulum, where host signal peptidase cleaves it into pE2, 6K and E1 proteins. pE2 is further processed to mature E3 and E2 by host furin in trans-Golgi vesicle. In terms of processing, spike glycoprotein E2: Palmitoylated via thioester bonds. These palmitoylations may induce disruption of the C-terminus transmembrane. This would result in the reorientation of E2 C-terminus from lumenal to cytoplasmic side. Spike glycoprotein E2: N-glycosylated.

The protein localises to the virion membrane. Its subcellular location is the host cell membrane. Spike glycoprotein E2: Plays a role in viral attachment to target host cell, by binding to the cell receptor. Synthesized as a p62 precursor which is processed by furin at the cell membrane just before virion budding, giving rise to E2-E1 heterodimer. The p62-E1 heterodimer is stable, whereas E2-E1 is unstable and dissociate at low pH. p62 is processed at the last step, presumably to avoid E1 fusion activation before its final export to cell surface. E2 C-terminus contains a transitory transmembrane that would be disrupted by palmitoylation, resulting in reorientation of the C-terminal tail from lumenal to cytoplasmic side. This step is critical since E2 C-terminus is involved in budding by interacting with capsid proteins. This release of E2 C-terminus in cytoplasm occurs lately in protein export, and precludes premature assembly of particles at the endoplasmic reticulum membrane. The polypeptide is Structural polyprotein (Ross river virus (strain 213970) (RRV)).